The following is a 64-amino-acid chain: PYLa/PGLa A (64 aa).

The signal sequence occupies residues Met1–Ala20. The propeptide occupies Glu21 to Arg35. Leucine amide is present on Leu59. A propeptide spanning residues Gly60–Ser64 is cleaved from the precursor.

It belongs to the gastrin/cholecystokinin family. Magainin subfamily. Expressed by the skin glands. Synthesized in the stomach and stored in a novel granular multinucleated cell in the gastric mucosa. Stored as active, processed peptides in large granules within the granular gland secretions of the skin.

The protein localises to the secreted. PGLa and PGLa-H display a broad-spectrum of antibacterial activity against a range of Gram-positive and Gram-negative bacteria. PGLa also displays antifungal activity against C.albicans ATCC 14053. PGLa-H shows moderate antibacterial activity against the multidrug-resistant methicillin-resistant S.aureus (MRSA) but exhibits very little hemolytic activity. The chain is PYLa/PGLa A (pgla-a) from Xenopus laevis (African clawed frog).